Consider the following 141-residue polypeptide: Hemoglobin subunit alpha-3 (141 aa).

Ser-1 carries the N-acetylserine modification. The 141-residue stretch at 1–141 (SLSASEKAAV…VSAVLTSKYR (141 aa)) folds into the Globin domain. His-58 is a binding site for O2. A heme b-binding site is contributed by His-87.

The protein belongs to the globin family. As to quaternary structure, heterotetramer of two alpha chains and two beta chains. In terms of tissue distribution, red blood cells.

Its function is as follows. This is a tadpole (larval) alpha chain. This Aquarana catesbeiana (American bullfrog) protein is Hemoglobin subunit alpha-3.